The primary structure comprises 143 residues: Peptide methionine sulfoxide reductase MsrB (143 aa).

Residues 16 to 139 (DAELRRRLTP…NSAALNFESR (124 aa)) form the MsrB domain. Positions 55, 58, 104, and 107 each coordinate Zn(2+). Cysteine 128 serves as the catalytic Nucleophile.

Belongs to the MsrB Met sulfoxide reductase family. The cofactor is Zn(2+).

The catalysed reaction is L-methionyl-[protein] + [thioredoxin]-disulfide + H2O = L-methionyl-(R)-S-oxide-[protein] + [thioredoxin]-dithiol. The chain is Peptide methionine sulfoxide reductase MsrB from Burkholderia orbicola (strain MC0-3).